A 274-amino-acid chain; its full sequence is 2,3,4,5-tetrahydropyridine-2,6-dicarboxylate N-succinyltransferase (274 aa).

Arg-106 and Asp-143 together coordinate substrate.

It belongs to the transferase hexapeptide repeat family. In terms of assembly, homotrimer.

It is found in the cytoplasm. It carries out the reaction (S)-2,3,4,5-tetrahydrodipicolinate + succinyl-CoA + H2O = (S)-2-succinylamino-6-oxoheptanedioate + CoA. The protein operates within amino-acid biosynthesis; L-lysine biosynthesis via DAP pathway; LL-2,6-diaminopimelate from (S)-tetrahydrodipicolinate (succinylase route): step 1/3. The sequence is that of 2,3,4,5-tetrahydropyridine-2,6-dicarboxylate N-succinyltransferase from Herminiimonas arsenicoxydans.